We begin with the raw amino-acid sequence, 282 residues long: Shikimate dehydrogenase (NADP(+)) (282 aa).

Residues 16 to 18 and Thr63 each bind shikimate; that span reads SLS. Lys67 (proton acceptor) is an active-site residue. Positions 88 and 103 each coordinate shikimate. Residues 128–132 and Gly243 each bind NADP(+); that span reads GAGGA.

The protein belongs to the shikimate dehydrogenase family. In terms of assembly, homodimer.

The catalysed reaction is shikimate + NADP(+) = 3-dehydroshikimate + NADPH + H(+). The protein operates within metabolic intermediate biosynthesis; chorismate biosynthesis; chorismate from D-erythrose 4-phosphate and phosphoenolpyruvate: step 4/7. Functionally, involved in the biosynthesis of the chorismate, which leads to the biosynthesis of aromatic amino acids. Catalyzes the reversible NADPH linked reduction of 3-dehydroshikimate (DHSA) to yield shikimate (SA). This is Shikimate dehydrogenase (NADP(+)) from Xylella fastidiosa (strain Temecula1 / ATCC 700964).